Consider the following 91-residue polypeptide: Small ribosomal subunit protein uS19 (91 aa).

Belongs to the universal ribosomal protein uS19 family.

Protein S19 forms a complex with S13 that binds strongly to the 16S ribosomal RNA. This chain is Small ribosomal subunit protein uS19, found in Methylacidiphilum infernorum (isolate V4) (Methylokorus infernorum (strain V4)).